Here is a 415-residue protein sequence, read N- to C-terminus: Multidrug resistance protein MdtA (415 aa).

An N-terminal signal peptide occupies residues M1–A21. Over residues D31–P47 the composition is skewed to polar residues. Disordered stretches follow at residues D31–A60 and E392–S415. The span at P399 to S415 shows a compositional bias: basic and acidic residues.

Belongs to the membrane fusion protein (MFP) (TC 8.A.1) family. As to quaternary structure, part of a tripartite efflux system composed of MdtA, MdtB and MdtC.

The protein resides in the cell inner membrane. In terms of biological role, the MdtABC tripartite complex confers resistance against novobiocin and deoxycholate. This is Multidrug resistance protein MdtA from Escherichia coli O157:H7.